Consider the following 181-residue polypeptide: Lysozyme B (181 aa).

The N-terminal stretch at 1–19 (MRISFFLLILAVIIGYAYG) is a signal peptide. Positions 139–181 (LTDSRPLGPFNVTEEEKAQLFIDHEIAMAQCEAEKTCNGFDLE) are excised as a propeptide.

This sequence belongs to the dictyostelium lysozyme family. Contains six disulfide bonds.

The protein localises to the cytoplasmic vesicle lumen. It catalyses the reaction Hydrolysis of (1-&gt;4)-beta-linkages between N-acetylmuramic acid and N-acetyl-D-glucosamine residues in a peptidoglycan and between N-acetyl-D-glucosamine residues in chitodextrins.. Its function is as follows. Has antibacterial activity. This Dictyostelium discoideum (Social amoeba) protein is Lysozyme B (alyB).